The sequence spans 468 residues: uncharacterized protein (468 aa).

The 59-residue stretch at 3–61 folds into the TRAM domain; that stretch reads TFANGMTLDVTVDALAPGGKAVCRHEGRVIFVDRGLPGQQLHVRLTTVRKRFAEAECLA. [4Fe-4S] cluster-binding residues include cysteine 74, cysteine 80, cysteine 83, and cysteine 162. Glutamine 288, tyrosine 317, glutamate 338, and aspartate 389 together coordinate S-adenosyl-L-methionine. The active-site Nucleophile is the cysteine 416.

Belongs to the class I-like SAM-binding methyltransferase superfamily. RNA M5U methyltransferase family.

This is an uncharacterized protein from Nitratidesulfovibrio vulgaris (strain ATCC 29579 / DSM 644 / CCUG 34227 / NCIMB 8303 / VKM B-1760 / Hildenborough) (Desulfovibrio vulgaris).